The sequence spans 400 residues: Dual specificity mitogen-activated protein kinase kinase 2 (400 aa).

N-acetylmethionine is present on methionine 1. Serine 23 is subject to Phosphoserine. The Protein kinase domain occupies phenylalanine 72–isoleucine 369. Residues leucine 78–valine 86 and lysine 101 contribute to the ATP site. Aspartate 194 functions as the Proton acceptor in the catalytic mechanism. Position 222 is a phosphoserine; by RAF (serine 222). 4 positions are modified to phosphoserine: serine 226, serine 293, serine 295, and serine 306. Positions glutamate 288 to glycine 309 are disordered. Residues threonine 394 and threonine 396 each carry the phosphothreonine modification.

The protein belongs to the protein kinase superfamily. STE Ser/Thr protein kinase family. MAP kinase kinase subfamily. Interacts with MORG1. Interacts with SGK1. Interacts with KSR1. Interacts with KSR1 and BRAF; the interaction with KSR1 mediates KSR1-BRAF dimerization. Interacts with GLS. Mg(2+) is required as a cofactor. MAPKK is itself dependent on Ser/Thr phosphorylation for activity catalyzed by MAP kinase kinase kinases (RAF or MEKK1).

It localises to the cytoplasm. It is found in the membrane. The catalysed reaction is L-seryl-[protein] + ATP = O-phospho-L-seryl-[protein] + ADP + H(+). It catalyses the reaction L-threonyl-[protein] + ATP = O-phospho-L-threonyl-[protein] + ADP + H(+). The enzyme catalyses L-tyrosyl-[protein] + ATP = O-phospho-L-tyrosyl-[protein] + ADP + H(+). Its function is as follows. Catalyzes the concomitant phosphorylation of a threonine and a tyrosine residue in a Thr-Glu-Tyr sequence located in MAP kinases. Activates the ERK1 and ERK2 MAP kinases. Activates BRAF in a KSR1 or KSR2-dependent manner; by binding to KSR1 or KSR2 releases the inhibitory intramolecular interaction between KSR1 or KSR2 protein kinase and N-terminal domains which promotes KSR1 or KSR2-BRAF dimerization and BRAF activation. This Canis lupus familiaris (Dog) protein is Dual specificity mitogen-activated protein kinase kinase 2 (MAP2K2).